Consider the following 62-residue polypeptide: Temporin-1PLa (62 aa).

The N-terminal stretch at 1 to 22 (MFTSKKSLLLLFFLGTINLSLC) is a signal peptide. A propeptide spanning residues 23–45 (EEERDADEEERRDDPDEMNVEVE) is cleaved from the precursor. Ile60 carries the post-translational modification Isoleucine amide.

In terms of tissue distribution, expressed by the skin glands.

It is found in the secreted. In terms of biological role, antimicrobial activity against the Gram-positive bacterium S.aureus. This Lithobates palustris (Pickerel frog) protein is Temporin-1PLa.